The primary structure comprises 329 residues: MFSLSFIVIAVIIIVALLILFSFVPIGLWISALAAGVHVGIGTLVGMRLRRVSPRKVIAPLIKAHKAGLALTTNQLESHYLAGGNVDRVVDANIAAQRADIDLPFERAAAIDLAGRDVLEAVQMSVNPKVIETPFIAGVAMNGIEVKAKARITVRANIARLVGGAGEETIIARVGEGIVSTIGSSKHHTEVLENPDNISKTVLSKGLDSGTAFEILSIDIADVDISKNIGADLQTEQALADKNIAQAKAEERRAMAVATEQEMKARVQEMHAKVVEAESEVPLAMAEALRSGNISVKDYYNLKNIEADTGMRNAINKRTDQSDDESPEH.

2 consecutive transmembrane segments (helical) span residues 6–26 and 27–47; these read FIVI…FVPI and GLWI…LVGM.

The protein belongs to the flotillin-like FloA family. In terms of assembly, homooligomerizes.

The protein resides in the cell membrane. The protein localises to the membrane raft. Its function is as follows. Found in functional membrane microdomains (FMM) that may be equivalent to eukaryotic membrane rafts. FMMs are highly dynamic and increase in number as cells age. Flotillins are thought to be important factors in membrane fluidity. This is Flotillin-like protein FloA from Staphylococcus aureus (strain JH1).